The sequence spans 226 residues: ATP synthase subunit a (226 aa).

6 helical membrane-spanning segments follow: residues 18 to 38 (FITG…SLGA), 79 to 99 (LAGT…IPGF), 105 to 125 (SWSF…FEGI), 134 to 154 (FAHF…IEII), 179 to 199 (LIML…VLFF), and 201 to 221 (GILQ…GAVL).

The protein belongs to the ATPase A chain family. In terms of assembly, F-type ATPases have 2 components, CF(1) - the catalytic core - and CF(0) - the membrane proton channel. CF(1) has five subunits: alpha(3), beta(3), gamma(1), delta(1), epsilon(1). CF(0) has three main subunits: a(1), b(2) and c(9-12). The alpha and beta chains form an alternating ring which encloses part of the gamma chain. CF(1) is attached to CF(0) by a central stalk formed by the gamma and epsilon chains, while a peripheral stalk is formed by the delta and b chains.

Its subcellular location is the cell inner membrane. Functionally, key component of the proton channel; it plays a direct role in the translocation of protons across the membrane. This is ATP synthase subunit a from Helicobacter pylori (strain HPAG1).